We begin with the raw amino-acid sequence, 148 residues long: Wound-induced proteinase inhibitor 2 (148 aa).

The N-terminal stretch at 1 to 25 is a signal peptide; that stretch reads MAVHKEVNFVAYLLIVLGMFLYVDA. The stretch at 26–81 is one 1; trypsin-inhibitory repeat; sequence KACTRECGNLGFGICPRSEGSPLNPICINCCSGYKGCNYYNSFGKFICEGESDPKR. Disulfide bonds link cysteine 28-cysteine 116, cysteine 32-cysteine 112, cysteine 40-cysteine 122, cysteine 52-cysteine 89, cysteine 55-cysteine 73, cysteine 56-cysteine 85, cysteine 62-cysteine 98, and cysteine 115-cysteine 133. One copy of the 2; chymotrypsin-inhibitory repeat lies at 83-141; that stretch reads NACTFNCDPNIAYSRCPRSQGKSLIYPTGCTTCCTGYKGCYYFGKDGKFVCEGESDEPK.

The protein belongs to the protease inhibitor I20 (potato type II proteinase inhibitor) family.

The protein resides in the secreted. Functionally, potent inhibitor of both trypsin and chymotrypsin. This chain is Wound-induced proteinase inhibitor 2, found in Solanum lycopersicum (Tomato).